Here is a 282-residue protein sequence, read N- to C-terminus: Undecaprenyl-diphosphatase (282 aa).

Helical transmembrane passes span 90-110 (YWLG…GLVC), 121-141 (LWVV…AEYV), 165-185 (LALI…LFLG), 194-214 (FGFL…IPDA), 228-248 (QLLV…SWLL), and 256-276 (LYWF…LLAV).

This sequence belongs to the UppP family.

It is found in the cell membrane. The catalysed reaction is di-trans,octa-cis-undecaprenyl diphosphate + H2O = di-trans,octa-cis-undecaprenyl phosphate + phosphate + H(+). Functionally, catalyzes the dephosphorylation of undecaprenyl diphosphate (UPP). Confers resistance to bacitracin. The protein is Undecaprenyl-diphosphatase of Mycobacterium leprae (strain Br4923).